The primary structure comprises 121 residues: Flagellar protein FliT (121 aa).

Residues Met-1 to Leu-50 are required for homodimerization. The tract at residues Met-60–Val-98 is fliD binding.

Belongs to the FliT family. In terms of assembly, homodimer. Interacts with FliD and FlhC.

It is found in the cytoplasm. The protein localises to the cytosol. In terms of biological role, dual-function protein that regulates the transcription of class 2 flagellar operons and that also acts as an export chaperone for the filament-capping protein FliD. As a transcriptional regulator, acts as an anti-FlhDC factor; it directly binds FlhC, thus inhibiting the binding of the FlhC/FlhD complex to class 2 promoters, resulting in decreased expression of class 2 flagellar operons. As a chaperone, effects FliD transition to the membrane by preventing its premature polymerization, and by directing it to the export apparatus. The chain is Flagellar protein FliT from Escherichia coli O8 (strain IAI1).